A 443-amino-acid chain; its full sequence is ATP-dependent protease ATPase subunit HslU (443 aa).

ATP contacts are provided by residues I18, G60–E65, D256, E321, and R393.

It belongs to the ClpX chaperone family. HslU subfamily. A double ring-shaped homohexamer of HslV is capped on each side by a ring-shaped HslU homohexamer. The assembly of the HslU/HslV complex is dependent on binding of ATP.

The protein resides in the cytoplasm. Its function is as follows. ATPase subunit of a proteasome-like degradation complex; this subunit has chaperone activity. The binding of ATP and its subsequent hydrolysis by HslU are essential for unfolding of protein substrates subsequently hydrolyzed by HslV. HslU recognizes the N-terminal part of its protein substrates and unfolds these before they are guided to HslV for hydrolysis. The chain is ATP-dependent protease ATPase subunit HslU from Buchnera aphidicola subsp. Acyrthosiphon pisum (strain APS) (Acyrthosiphon pisum symbiotic bacterium).